Consider the following 372-residue polypeptide: Glutamate 5-kinase (372 aa).

Position 14 (K14) interacts with ATP. S54, D141, and N153 together coordinate substrate. T173–D174 contacts ATP. The 79-residue stretch at R280 to M358 folds into the PUA domain.

Belongs to the glutamate 5-kinase family.

It localises to the cytoplasm. It catalyses the reaction L-glutamate + ATP = L-glutamyl 5-phosphate + ADP. Its pathway is amino-acid biosynthesis; L-proline biosynthesis; L-glutamate 5-semialdehyde from L-glutamate: step 1/2. Its function is as follows. Catalyzes the transfer of a phosphate group to glutamate to form L-glutamate 5-phosphate. The polypeptide is Glutamate 5-kinase (Burkholderia ambifaria (strain ATCC BAA-244 / DSM 16087 / CCUG 44356 / LMG 19182 / AMMD) (Burkholderia cepacia (strain AMMD))).